A 323-amino-acid chain; its full sequence is Aldo-keto reductase family 1 member C1 (323 aa).

NADP(+) is bound by residues 20–24 and Asp-50; that span reads GFGTY. A substrate-binding site is contributed by Tyr-24. The Proton donor role is filled by Tyr-55. His-117 serves as a coordination point for substrate. Residues 166-167, Gln-190, and 216-222 each bind NADP(+); these read SN and YSALGSH. Substrate contacts are provided by His-222 and Trp-227. 270–280 lines the NADP(+) pocket; that stretch reads KSYNEQRIRQN.

This sequence belongs to the aldo/keto reductase family. As to quaternary structure, monomer. In terms of tissue distribution, expressed in all tissues tested including liver, prostate, testis, adrenal gland, brain, uterus, mammary gland and keratinocytes. Highest levels found in liver, mammary gland and brain.

The protein resides in the cytoplasm. It is found in the cytosol. The catalysed reaction is a 3alpha-hydroxysteroid + NADP(+) = a 3-oxosteroid + NADPH + H(+). The enzyme catalyses a 3alpha-hydroxysteroid + NAD(+) = a 3-oxosteroid + NADH + H(+). It carries out the reaction (17R,20S)-17,20-dihydroxypregn-4-en-3-one + NADP(+) = 17alpha-hydroxyprogesterone + NADPH + H(+). It catalyses the reaction (17R,20S)-17,20-dihydroxypregn-4-en-3-one + NAD(+) = 17alpha-hydroxyprogesterone + NADH + H(+). The catalysed reaction is (20S)-hydroxypregn-4-en-3-one + NADP(+) = progesterone + NADPH + H(+). The enzyme catalyses (20S)-hydroxypregn-4-en-3-one + NAD(+) = progesterone + NADH + H(+). It carries out the reaction (1R,2R)-1,2-dihydrobenzene-1,2-diol + NADP(+) = catechol + NADPH + H(+). It catalyses the reaction (S)-indan-1-ol + NAD(+) = indan-1-one + NADH + H(+). The catalysed reaction is (S)-indan-1-ol + NADP(+) = indan-1-one + NADPH + H(+). The enzyme catalyses 5alpha-androstane-3alpha,17beta-diol + NADP(+) = 17beta-hydroxy-5alpha-androstan-3-one + NADPH + H(+). It carries out the reaction 5alpha-androstane-3beta,17beta-diol + NADP(+) = 17beta-hydroxy-5alpha-androstan-3-one + NADPH + H(+). It catalyses the reaction 5alpha-androstane-3alpha,17beta-diol + NAD(+) = 17beta-hydroxy-5alpha-androstan-3-one + NADH + H(+). The catalysed reaction is 17beta-hydroxy-5alpha-androstan-3-one + NADP(+) = 5alpha-androstan-3,17-dione + NADPH + H(+). The enzyme catalyses androsterone + NADP(+) = 5alpha-androstan-3,17-dione + NADPH + H(+). It carries out the reaction androsterone + NADPH + H(+) = 5alpha-androstane-3alpha,17beta-diol + NADP(+). It catalyses the reaction 5alpha-androstane-3alpha,17beta-diol + NAD(+) = androsterone + NADH + H(+). The catalysed reaction is 17beta-estradiol + NADP(+) = estrone + NADPH + H(+). The enzyme catalyses 17beta-estradiol + NAD(+) = estrone + NADH + H(+). It carries out the reaction testosterone + NADP(+) = androst-4-ene-3,17-dione + NADPH + H(+). It catalyses the reaction 20alpha-hydroxy-5beta-pregnan-3-one + NADP(+) = 5beta-pregnan-3,20-dione + NADPH + H(+). The catalysed reaction is 3beta-hydroxy-5beta-pregnane-20-one + NADP(+) = 5beta-pregnan-3,20-dione + NADPH + H(+). The enzyme catalyses 3beta-hydroxy-5beta-pregnane-20-one + NADPH + H(+) = 3beta,20alpha-dihydroxy-5beta-pregnane + NADP(+). It carries out the reaction (3beta,5alpha,17beta)-3-hydroxyandrostan-17-yl sulfate + NADP(+) = 5alpha-dihydrotestosterone sulfate + NADPH + H(+). The protein operates within steroid metabolism. Inhibited by hexestrol with an IC(50) of 9.5 uM, 1,10-phenanthroline with an IC(50) of 55 uM, 1,7-phenanthroline with an IC(50) of 72 uM, flufenamic acid with an IC(50) of 6.0 uM, indomethacin with an IC(50) of 140 uM, ibuprofen with an IC(50) of 950 uM, lithocholic acid with an IC(50) of 25 uM, ursodeoxycholic acid with an IC(50) of 340 uM and chenodeoxycholic acid with an IC(50) of 570 uM. The oxidation reaction is inhibited by low micromolar concentrations of NADPH. Its function is as follows. Cytosolic aldo-keto reductase that catalyzes the NADH and NADPH-dependent reduction of ketosteroids to hydroxysteroids. Most probably acts as a reductase in vivo since the oxidase activity measured in vitro is inhibited by physiological concentrations of NADPH. Displays a broad positional specificity acting on positions 3, 17 and 20 of steroids and regulates the metabolism of hormones like estrogens and androgens. May also reduce conjugated steroids such as 5alpha-dihydrotestosterone sulfate. Displays affinity for bile acids. In Homo sapiens (Human), this protein is Aldo-keto reductase family 1 member C1 (AKR1C1).